Reading from the N-terminus, the 207-residue chain is Large ribosomal subunit protein uL4 (207 aa).

Positions 44-78 (QRQGTHDVKNRSEVRGGGRKPWRQKGTGRARQGSI) are disordered. Over residues 47–59 (GTHDVKNRSEVRG) the composition is skewed to basic and acidic residues. The segment covering 60 to 71 (GGRKPWRQKGTG) has biased composition (basic residues).

It belongs to the universal ribosomal protein uL4 family. Part of the 50S ribosomal subunit.

One of the primary rRNA binding proteins, this protein initially binds near the 5'-end of the 23S rRNA. It is important during the early stages of 50S assembly. It makes multiple contacts with different domains of the 23S rRNA in the assembled 50S subunit and ribosome. Functionally, forms part of the polypeptide exit tunnel. The sequence is that of Large ribosomal subunit protein uL4 from Brevibacillus brevis (strain 47 / JCM 6285 / NBRC 100599).